The chain runs to 107 residues: Small integral membrane protein 19 (107 aa).

A helical transmembrane segment spans residues 25–43 (ATNVYLIVILVSFGLFMYA). Residues 88-107 (RKYEYQQPQSQADSVQLSLE) form a disordered region. A compositionally biased stretch (polar residues) spans 93–107 (QQPQSQADSVQLSLE).

This sequence belongs to the SMIM19 family.

It localises to the membrane. This is Small integral membrane protein 19 (Smim19) from Mus musculus (Mouse).